Consider the following 1081-residue polypeptide: Pre-mRNA-splicing factor SYF1 (1081 aa).

The disordered stretch occupies residues 1-27 (MPPKMRSSQENVAVSSDATIQASSASS). HAT repeat units follow at residues 54-86 (TLIPAADILLEQELLRNPDNFRSWSSYIDHIIN), 117-149 (TALRRLTSIYERALAQFPTRYSLWRDYLQNRSR), 204-236 (QEWKSLAALYERALMWLPTMPRLWLSYLSMFIH), and 243-277 (LSFTHARRTFDRALRTLPGSLHLRVWKVYLKWAER). A disordered region spans residues 308–337 (QREDQDEPEGEEEEAEDDAQSDRSRKQSGS). Acidic residues predominate over residues 311 to 326 (DQDEPEGEEEEAEDDA). 2 HAT repeats span residues 444-477 (TRLNVTAIIQKDGLDKFSDQSGRLWTGLATYWIK) and 479-514 (GEFDVARDTFEAGIQTVKTVRDFTQIFDAYAETSEN). Acidic residues predominate over residues 526-540 (EGGDEEADAEDQEET). The tract at residues 526–546 (EGGDEEADAEDQEETREDKEA) is disordered. HAT repeat units lie at residues 656 to 692 (GDLESARKIFEKAITIPFRRVDDLAEIWCEWAEMELR), 711 to 745 (RNTKGIQYHDDTLPPQTRLFKSLKLWSFYVDLEES), 747 to 779 (GDVESTKRVYEKMLELKIASAQIIINYAAFLED), 781 to 815 (KYFEESFKVFERGVELFSYPVAFEIWNVYLSKFVK), 820 to 854 (AKLERARDLFEQALDKCPARFCKPLMLMYGQLEEE), 856 to 887 (GLVKRAMKIYERATRAVSTDDRFDMYVFYIAK), 892 to 926 (FGLAATRPIYERAIESLPDRQTAEMCLRFAALERK), and 928 to 962 (GEIDRARVIYAHASQFCDPRTQTDFWKEWNQFEIE). Low complexity-rich tracts occupy residues 1001 to 1011 (NQAQRGAQGSS) and 1047 to 1059 (STAASGARSADTT). Disordered stretches follow at residues 1001-1022 (NQAQRGAQGSSNGHVREDDVDA) and 1047-1081 (STAASGARSADTTIGDVAKNDEVVGGDDQDDQDLL). The segment covering 1070 to 1081 (VGGDDQDDQDLL) has biased composition (acidic residues).

It belongs to the crooked-neck family. As to quaternary structure, associated with the spliceosome.

It is found in the nucleus. Functionally, involved in pre-mRNA splicing and cell cycle progression. This Mycosarcoma maydis (Corn smut fungus) protein is Pre-mRNA-splicing factor SYF1 (SYF1).